A 116-amino-acid chain; its full sequence is Protein Wnt-5b (116 aa).

A lipid anchor (O-palmitoleoyl serine; by PORCN) is attached at Ser1. Asn69 and Asn83 each carry an N-linked (GlcNAc...) asparagine glycan. The cysteines at positions 82 and 97 are disulfide-linked.

The protein belongs to the Wnt family. In terms of processing, palmitoleoylation is required for efficient binding to frizzled receptors. Depalmitoleoylation leads to Wnt signaling pathway inhibition.

It localises to the secreted. The protein localises to the extracellular space. The protein resides in the extracellular matrix. Functionally, ligand for members of the frizzled family of seven transmembrane receptors. Probable developmental protein. May be a signaling molecule which affects the development of discrete regions of tissues. Is likely to signal over only few cell diameters. The protein is Protein Wnt-5b (WNT-5B) of Plethodon jordani (Red-cheeked salamander).